Here is a 287-residue protein sequence, read N- to C-terminus: Large ribosomal subunit protein uL2 (287 aa).

A disordered region spans residues 221-287; it reads RGSVMNPCDH…SKRSRGGRDS (67 aa). The span at 258–287 shows a compositional bias: basic residues; the sequence is KTRKRNKPSNRFVLRKRRRVSKRSRGGRDS.

The protein belongs to the universal ribosomal protein uL2 family. Part of the 50S ribosomal subunit. Forms a bridge to the 30S subunit in the 70S ribosome.

Functionally, one of the primary rRNA binding proteins. Required for association of the 30S and 50S subunits to form the 70S ribosome, for tRNA binding and peptide bond formation. It has been suggested to have peptidyltransferase activity; this is somewhat controversial. Makes several contacts with the 16S rRNA in the 70S ribosome. The polypeptide is Large ribosomal subunit protein uL2 (Prochlorococcus marinus (strain SARG / CCMP1375 / SS120)).